A 390-amino-acid polypeptide reads, in one-letter code: L-rhamnonate dehydratase (390 aa).

Substrate contacts are provided by His-19 and Arg-45. The Mg(2+) site is built by Asp-211, Glu-237, and Glu-265. His-315 acts as the Proton acceptor in catalysis. Glu-335 provides a ligand contact to substrate.

Belongs to the mandelate racemase/muconate lactonizing enzyme family. RhamD subfamily. Mg(2+) serves as cofactor.

The enzyme catalyses L-rhamnonate = 2-dehydro-3-deoxy-L-rhamnonate + H2O. Catalyzes the dehydration of L-rhamnonate to 2-keto-3-deoxy-L-rhamnonate (KDR). This is L-rhamnonate dehydratase from Saccharopolyspora erythraea (strain ATCC 11635 / DSM 40517 / JCM 4748 / NBRC 13426 / NCIMB 8594 / NRRL 2338).